Here is a 216-residue protein sequence, read N- to C-terminus: Ras-related protein Rab-5C (216 aa).

10 residues coordinate GTP: Ser-30, Ala-31, Gly-33, Lys-34, Ser-35, Ser-36, His-47, Glu-48, Thr-53, and Gly-79. Ser-35 provides a ligand contact to Mg(2+). 2 short sequence motifs (switch) span residues 45 to 57 (QFHE…IGAA) and 78 to 94 (AGQE…YRGA). Thr-53 contributes to the Mg(2+) binding site. Position 85 is a phosphoserine (Ser-85). Residues Asn-134, Lys-135, Asp-137, Ala-165, and Lys-166 each coordinate GTP. The interval 185–216 (NEPQNAAGAPSRNRGVDLQENSPASRSQCCSN) is disordered. Residues 203 to 216 (QENSPASRSQCCSN) are compositionally biased toward polar residues. Residues Cys-213 and Cys-214 are each lipidated (S-geranylgeranyl cysteine).

The protein belongs to the small GTPase superfamily. Rab family. In terms of assembly, interacts with EEA1 and INCA1. Interacts with GDI1, GDI2, CHML and CHM; phosphorylation at Ser-85 disrupts this interaction. Mg(2+) is required as a cofactor. In terms of processing, phosphorylation of Ser-85 in the switch II region by LRRK2 prevents the association of RAB regulatory proteins, including CHM, CHML and RAB GDP dissociation inhibitors GDI1 and GDI2.

The protein resides in the cell membrane. The protein localises to the early endosome membrane. Its subcellular location is the melanosome. The catalysed reaction is GTP + H2O = GDP + phosphate + H(+). Its activity is regulated as follows. Regulated by guanine nucleotide exchange factors (GEFs) which promote the exchange of bound GDP for free GTP. Regulated by GTPase activating proteins (GAPs) which increase the GTP hydrolysis activity. Inhibited by GDP dissociation inhibitors (GDIs). Functionally, the small GTPases Rab are key regulators of intracellular membrane trafficking, from the formation of transport vesicles to their fusion with membranes. Rabs cycle between an inactive GDP-bound form and an active GTP-bound form that is able to recruit to membranes different sets of downstream effectors directly responsible for vesicle formation, movement, tethering and fusion. The sequence is that of Ras-related protein Rab-5C (RAB5C) from Canis lupus familiaris (Dog).